Here is a 176-residue protein sequence, read N- to C-terminus: Neuroblastoma suppressor of tumorigenicity 1 (176 aa).

An N-terminal signal peptide occupies residues 1–17 (MTVWLLIGFLLPVAIFA). Cystine bridges form between cysteine 34–cysteine 84, cysteine 48–cysteine 98, cysteine 58–cysteine 117, cysteine 62–cysteine 119, and cysteine 81–cysteine 122. Residues 34-123 (CEAKNITQIV…ILQCSCQACG (90 aa)) enclose the CTCK domain. A disordered region spans residues 148–176 (ETLGHHHHRPPAREEDSPAQSQREGESEE).

Belongs to the DAN family. Interacts with bmp2; the interaction is blocked in presence of nog.

It localises to the secreted. In terms of biological role, may act as a tumor suppressor. Cytokine that has an axial patterning activity. Acts like bone morpho-genetic protein (BMP) antagonist in embryonic explants. Blocks the bmp2 activity. The chain is Neuroblastoma suppressor of tumorigenicity 1 (nbl1) from Xenopus tropicalis (Western clawed frog).